A 163-amino-acid chain; its full sequence is Crossover junction endodeoxyribonuclease RuvC (163 aa).

Catalysis depends on residues aspartate 8, glutamate 68, and aspartate 140. Mg(2+) contacts are provided by aspartate 8, glutamate 68, and aspartate 140.

The protein belongs to the RuvC family. As to quaternary structure, homodimer which binds Holliday junction (HJ) DNA. The HJ becomes 2-fold symmetrical on binding to RuvC with unstacked arms; it has a different conformation from HJ DNA in complex with RuvA. In the full resolvosome a probable DNA-RuvA(4)-RuvB(12)-RuvC(2) complex forms which resolves the HJ. Requires Mg(2+) as cofactor.

It is found in the cytoplasm. The enzyme catalyses Endonucleolytic cleavage at a junction such as a reciprocal single-stranded crossover between two homologous DNA duplexes (Holliday junction).. Functionally, the RuvA-RuvB-RuvC complex processes Holliday junction (HJ) DNA during genetic recombination and DNA repair. Endonuclease that resolves HJ intermediates. Cleaves cruciform DNA by making single-stranded nicks across the HJ at symmetrical positions within the homologous arms, yielding a 5'-phosphate and a 3'-hydroxyl group; requires a central core of homology in the junction. The consensus cleavage sequence is 5'-(A/T)TT(C/G)-3'. Cleavage occurs on the 3'-side of the TT dinucleotide at the point of strand exchange. HJ branch migration catalyzed by RuvA-RuvB allows RuvC to scan DNA until it finds its consensus sequence, where it cleaves and resolves the cruciform DNA. The chain is Crossover junction endodeoxyribonuclease RuvC from Erythrobacter litoralis (strain HTCC2594).